A 422-amino-acid chain; its full sequence is MVTIVLGAQFGDEGKGKITDLLSQSAALCCRAAGGHNAGHTIVHDNITYDFHILPSGLIAPDCVNLIGTGTVVHLPSFFKELDALKAKGLKDAHKRIFISDRAQVCFDLHSVVDGLEEASLAGKKVGTTGKGIGPCYSDKASRRGVRIGEVLEEGVVEDNLRKLEAGYRARFGELNYDLEEEIGRFNEYRTKLQPYVVDQMTFLEKYRSSPSILVEGANALMLDIDHGTYPYVTSSCTGVGGAIQGLTLNPTSIRSIIGVVKAYSTRVGSGPFPTEQNNAIGEKMQTIGREFGVTTGRRRRCGWLDMVMCRYSNSINHYTSINLTKLDILDDFDEIKVAVAYKLDGKRLESFPALPGVLDKVEVEYVTFPGWKSTTMGIIRWEDLPANAQRYIQFIEREMGGVPIKWIGTGPARTHMIEREV.

Residues 11 to 17 (GDEGKGK) and 39 to 41 (GHT) each bind GTP. Asp12 functions as the Proton acceptor in the catalytic mechanism. Mg(2+)-binding residues include Asp12 and Gly39. Residues 12 to 15 (DEGK), 37 to 40 (NAGH), Thr129, Arg143, Asn219, Thr234, and Arg298 each bind IMP. The active-site Proton donor is His40. 294–300 (VTTGRRR) lines the substrate pocket. GTP is bound by residues Arg300, 326 to 328 (KLD), and 409 to 411 (GTG).

Belongs to the adenylosuccinate synthetase family. As to quaternary structure, homodimer. The cofactor is Mg(2+).

It is found in the cytoplasm. The enzyme catalyses IMP + L-aspartate + GTP = N(6)-(1,2-dicarboxyethyl)-AMP + GDP + phosphate + 2 H(+). It participates in purine metabolism; AMP biosynthesis via de novo pathway; AMP from IMP: step 1/2. Functionally, plays an important role in the de novo pathway and in the salvage pathway of purine nucleotide biosynthesis. Catalyzes the first committed step in the biosynthesis of AMP from IMP. The chain is Adenylosuccinate synthetase from Ajellomyces capsulatus (strain NAm1 / WU24) (Darling's disease fungus).